The primary structure comprises 396 residues: Tryptophan synthase beta chain (396 aa).

The residue at position 86 (Lys86) is an N6-(pyridoxal phosphate)lysine.

This sequence belongs to the TrpB family. As to quaternary structure, tetramer of two alpha and two beta chains. Pyridoxal 5'-phosphate serves as cofactor.

It carries out the reaction (1S,2R)-1-C-(indol-3-yl)glycerol 3-phosphate + L-serine = D-glyceraldehyde 3-phosphate + L-tryptophan + H2O. It participates in amino-acid biosynthesis; L-tryptophan biosynthesis; L-tryptophan from chorismate: step 5/5. Its function is as follows. The beta subunit is responsible for the synthesis of L-tryptophan from indole and L-serine. The sequence is that of Tryptophan synthase beta chain from Blochmanniella pennsylvanica (strain BPEN).